A 242-amino-acid polypeptide reads, in one-letter code: Probable transcriptional regulatory protein lp_2253 (242 aa).

A disordered region spans residues 1–21; it reads MSGHSKWHNIQGRKNAQDAKR.

This sequence belongs to the TACO1 family.

Its subcellular location is the cytoplasm. The protein is Probable transcriptional regulatory protein lp_2253 of Lactiplantibacillus plantarum (strain ATCC BAA-793 / NCIMB 8826 / WCFS1) (Lactobacillus plantarum).